The primary structure comprises 254 residues: MKIGVYGASGRIGKLLLEELKGGYKGLELSSVFVRQKCETDFSSFSHAPLVTNDLKAFVRACECVIDFSLPKGVDNLLEALLECPKILVSGTTGLEKETLEKMQQLALKAPLLHAHNMSLGIMMLNQLAFLASLKLKDADIEIVETHHNLKKDAPSGTALSLYETCAKARGYDEKNALTTHREGLRSKESIGIAALRGGDVAGKHTIGFYLEGEYIELSHTATNRSIFAKGALEVALWLKDKAAKKYEINEMFG.

An NAD(+)-binding site is contributed by 7-12; it reads GASGRI. R35 is an NADP(+) binding site. NAD(+) contacts are provided by residues 91 to 93 and 115 to 118; these read GTT and AHNM. H147 acts as the Proton donor/acceptor in catalysis. (S)-2,3,4,5-tetrahydrodipicolinate is bound at residue H148. The active-site Proton donor is K151. 157–158 is a (S)-2,3,4,5-tetrahydrodipicolinate binding site; that stretch reads GT.

It belongs to the DapB family.

Its subcellular location is the cytoplasm. The enzyme catalyses (S)-2,3,4,5-tetrahydrodipicolinate + NAD(+) + H2O = (2S,4S)-4-hydroxy-2,3,4,5-tetrahydrodipicolinate + NADH + H(+). It catalyses the reaction (S)-2,3,4,5-tetrahydrodipicolinate + NADP(+) + H2O = (2S,4S)-4-hydroxy-2,3,4,5-tetrahydrodipicolinate + NADPH + H(+). The protein operates within amino-acid biosynthesis; L-lysine biosynthesis via DAP pathway; (S)-tetrahydrodipicolinate from L-aspartate: step 4/4. Its function is as follows. Catalyzes the conversion of 4-hydroxy-tetrahydrodipicolinate (HTPA) to tetrahydrodipicolinate. This chain is 4-hydroxy-tetrahydrodipicolinate reductase, found in Helicobacter pylori (strain Shi470).